The primary structure comprises 1328 residues: Mitogen-activated protein kinase kinase kinase 19 (1328 aa).

Positions 1–19 are enriched in basic and acidic residues; that stretch reads MSSMPKPERHAESLLDICH. Disordered regions lie at residues 1-28, 44-74, 344-380, and 524-561; these read MSSMPKPERHAESLLDICHDTNSSPTDL, RSEEFDQDGDCSHSTLVNEEEDPSGGRQDWQ, VREEDIDCHGSKTRKPEEENSQYLSSRKNESSVAKNY, and QENDKHKMNSHRSKLDSKTKTSKKTPQNFVISTEGPIK. A compositionally biased stretch (basic and acidic residues) spans 344–361; it reads VREEDIDCHGSKTRKPEE. Residues 364–377 show a composition bias toward polar residues; sequence SQYLSSRKNESSVA. The segment covering 524–542 has biased composition (basic and acidic residues); it reads QENDKHKMNSHRSKLDSKT. Residues 1061–1324 enclose the Protein kinase domain; it reads WTKGEILGKG…ALQLLKHSFL (264 aa). Residues 1067 to 1075 and Lys-1089 each bind ATP; that span reads LGKGAYGTV. The Proton acceptor role is filled by Asp-1186.

It belongs to the protein kinase superfamily. STE Ser/Thr protein kinase family. STE20 subfamily.

The catalysed reaction is L-seryl-[protein] + ATP = O-phospho-L-seryl-[protein] + ADP + H(+). It carries out the reaction L-threonyl-[protein] + ATP = O-phospho-L-threonyl-[protein] + ADP + H(+). The chain is Mitogen-activated protein kinase kinase kinase 19 (MAP3K19) from Homo sapiens (Human).